The chain runs to 1447 residues: Bud site selection protein 4 (1447 aa).

The span at 1–16 (MHDAESTVDSLLKEID) shows a compositional bias: basic and acidic residues. Disordered stretches follow at residues 1 to 38 (MHDA…PHNW) and 57 to 76 (NTRS…KMST). S10 is modified (phosphoserine). Composition is skewed to polar residues over residues 22 to 32 (TKSNITQNGSE) and 59 to 76 (RSNA…KMST). S78, S81, S91, S96, and S167 each carry phosphoserine. The disordered stretch occupies residues 272–316 (NLPSKLLNTSNNSHSDSRSPTASVEDLNISTNLPGADSSQNNPVT). Polar residues predominate over residues 277–316 (LLNTSNNSHSDSRSPTASVEDLNISTNLPGADSSQNNPVT). T365 bears the Phosphothreonine mark. S367 carries the post-translational modification Phosphoserine. The disordered stretch occupies residues 444-479 (HQESEHANEQPAIIPQKDSSEETFTELNNESEFQRN). Phosphoserine is present on S511. The interval 529–591 (KTSAEEHDLS…NEEPEHVPLL (63 aa)) is disordered. The segment covering 538–548 (SSSCEDQSVSE) has biased composition (polar residues). Residues 549–580 (ARNKDRIEEKEVETKDENIETEKDESEYHKVE) show a composition bias toward basic and acidic residues. S616 bears the Phosphoserine mark. Positions 648–664 (ANSQFSQQSSITTASTV) are enriched in polar residues. Positions 648-673 (ANSQFSQQSSITTASTVDSKKDNGST) are disordered. Residues 768–879 (EHENIPLSTH…SLWESSYELK (112 aa)) form an interaction with IQG1 region. S805 and S811 each carry phosphoserine. The 112-residue stretch at 1302–1413 (NIYKEGYLLQ…WYNKLQEVVE (112 aa)) folds into the PH domain.

As to quaternary structure, interacts with AXL1, AXL2, IQG1 and SEC3. In terms of processing, phosphorylated by CDC28.

It is found in the bud neck. Required for establishment of the axial budding pattern in haploid cells. Cooperates with other bud site selection proteins to recognize a spatial landmark during mitosis and they subsequently become a landmark for downstream polarity establishment factors that coordinate axial budding and cytokinesis. Involved in the septin organization at the bud neck. In Saccharomyces cerevisiae (strain ATCC 204508 / S288c) (Baker's yeast), this protein is Bud site selection protein 4 (BUD4).